We begin with the raw amino-acid sequence, 334 residues long: Glycerol-3-phosphate dehydrogenase [NAD(P)+] (334 aa).

Serine 14, tyrosine 15, histidine 35, and lysine 109 together coordinate NADPH. Lysine 109, glycine 138, and threonine 140 together coordinate sn-glycerol 3-phosphate. Residue alanine 142 participates in NADPH binding. Lysine 194, aspartate 247, serine 257, arginine 258, and asparagine 259 together coordinate sn-glycerol 3-phosphate. Residue lysine 194 is the Proton acceptor of the active site. Arginine 258 provides a ligand contact to NADPH. Residues valine 282 and glutamate 284 each contribute to the NADPH site.

Belongs to the NAD-dependent glycerol-3-phosphate dehydrogenase family.

The protein localises to the cytoplasm. It catalyses the reaction sn-glycerol 3-phosphate + NAD(+) = dihydroxyacetone phosphate + NADH + H(+). It carries out the reaction sn-glycerol 3-phosphate + NADP(+) = dihydroxyacetone phosphate + NADPH + H(+). Its pathway is membrane lipid metabolism; glycerophospholipid metabolism. Catalyzes the reduction of the glycolytic intermediate dihydroxyacetone phosphate (DHAP) to sn-glycerol 3-phosphate (G3P), the key precursor for phospholipid synthesis. This chain is Glycerol-3-phosphate dehydrogenase [NAD(P)+], found in Psychromonas ingrahamii (strain DSM 17664 / CCUG 51855 / 37).